Here is a 228-residue protein sequence, read N- to C-terminus: Ribonuclease 3 (228 aa).

Residues 7–136 (LNKLKNEYNI…FNGALFLDQG (130 aa)) form the RNase III domain. Position 49 (glutamate 49) interacts with Mg(2+). The active site involves aspartate 53. Aspartate 122 and glutamate 125 together coordinate Mg(2+). The active site involves glutamate 125. The DRBM domain occupies 162 to 228 (DYKTDLQELL…AAKAALQKFE (67 aa)). Positions 207 to 228 (GEGHNKKAAEQQAAKAALQKFE) are disordered. Low complexity predominate over residues 216 to 228 (EQQAAKAALQKFE).

The protein belongs to the ribonuclease III family. In terms of assembly, homodimer. The cofactor is Mg(2+).

It is found in the cytoplasm. The enzyme catalyses Endonucleolytic cleavage to 5'-phosphomonoester.. Its function is as follows. Digests double-stranded RNA. Involved in the processing of primary rRNA transcript to yield the immediate precursors to the large and small rRNAs (23S and 16S). Processes some mRNAs, and tRNAs when they are encoded in the rRNA operon. Processes pre-crRNA and tracrRNA of type II CRISPR loci if present in the organism. The protein is Ribonuclease 3 of Lactobacillus acidophilus (strain ATCC 700396 / NCK56 / N2 / NCFM).